Consider the following 294-residue polypeptide: MFRGVGTAIVTPFKNGELDLESYERLVRYQLENGVNALIVLGTTGESPTVNEDEREKLVSRTLEIVDGKIPVIVGAGTNSTEKTLKLVKQAEKLGANGVLVVTPYYNKPTQEGLYQHYKYISERTDLGIVVYNVPGRTGVNVLPETAARIAADLKNVVGIKEANPDIDQIDRMVSLTKQARSDFMVWSGNDDRTFYLLCAGGDGVISVVSNVAPKQMVELCAEYFSGNLEKSREVHRKLRPLMKALFVETNPIPVKAALNLMGFIENELRLPLVPASEKTVELLRNVLKESGLL.

Thr-44 is a binding site for pyruvate. Catalysis depends on Tyr-132, which acts as the Proton donor/acceptor. Lys-161 acts as the Schiff-base intermediate with substrate in catalysis. A pyruvate-binding site is contributed by Ile-206.

It belongs to the DapA family. As to quaternary structure, homotetramer; dimer of dimers.

The protein localises to the cytoplasm. The catalysed reaction is L-aspartate 4-semialdehyde + pyruvate = (2S,4S)-4-hydroxy-2,3,4,5-tetrahydrodipicolinate + H2O + H(+). It participates in amino-acid biosynthesis; L-lysine biosynthesis via DAP pathway; (S)-tetrahydrodipicolinate from L-aspartate: step 3/4. In terms of biological role, catalyzes the condensation of (S)-aspartate-beta-semialdehyde [(S)-ASA] and pyruvate to 4-hydroxy-tetrahydrodipicolinate (HTPA). The protein is 4-hydroxy-tetrahydrodipicolinate synthase of Thermotoga sp. (strain RQ2).